Reading from the N-terminus, the 160-residue chain is SsrA-binding protein (160 aa).

It belongs to the SmpB family.

The protein localises to the cytoplasm. Its function is as follows. Required for rescue of stalled ribosomes mediated by trans-translation. Binds to transfer-messenger RNA (tmRNA), required for stable association of tmRNA with ribosomes. tmRNA and SmpB together mimic tRNA shape, replacing the anticodon stem-loop with SmpB. tmRNA is encoded by the ssrA gene; the 2 termini fold to resemble tRNA(Ala) and it encodes a 'tag peptide', a short internal open reading frame. During trans-translation Ala-aminoacylated tmRNA acts like a tRNA, entering the A-site of stalled ribosomes, displacing the stalled mRNA. The ribosome then switches to translate the ORF on the tmRNA; the nascent peptide is terminated with the 'tag peptide' encoded by the tmRNA and targeted for degradation. The ribosome is freed to recommence translation, which seems to be the essential function of trans-translation. This is SsrA-binding protein from Pasteurella multocida (strain Pm70).